We begin with the raw amino-acid sequence, 150 residues long: D-aminoacyl-tRNA deacylase (150 aa).

Positions 138 to 139 match the Gly-cisPro motif, important for rejection of L-amino acids motif; that stretch reads GP.

This sequence belongs to the DTD family. As to quaternary structure, homodimer.

It is found in the cytoplasm. It catalyses the reaction glycyl-tRNA(Ala) + H2O = tRNA(Ala) + glycine + H(+). It carries out the reaction a D-aminoacyl-tRNA + H2O = a tRNA + a D-alpha-amino acid + H(+). Functionally, an aminoacyl-tRNA editing enzyme that deacylates mischarged D-aminoacyl-tRNAs. Also deacylates mischarged glycyl-tRNA(Ala), protecting cells against glycine mischarging by AlaRS. Acts via tRNA-based rather than protein-based catalysis; rejects L-amino acids rather than detecting D-amino acids in the active site. By recycling D-aminoacyl-tRNA to D-amino acids and free tRNA molecules, this enzyme counteracts the toxicity associated with the formation of D-aminoacyl-tRNA entities in vivo and helps enforce protein L-homochirality. The chain is D-aminoacyl-tRNA deacylase from Chlorobium limicola (strain DSM 245 / NBRC 103803 / 6330).